The primary structure comprises 544 residues: Propane 2-monooxygenase, hydroxylase component large subunit (544 aa).

Positions 97, 127, 130, 192, 226, and 229 each coordinate Fe cation.

It belongs to the TmoA/XamoA family. The propane 2-monooxygenase multicomponent enzyme system is composed of an electron transfer component and a monooxygenase component interacting with the effector protein PrmD. The electron transfer component is composed of a reductase (PrmB), and the monooxygenase component is formed by a large subunit (PrmA) and a small subunit (PrmC). Probably requires the presence of the chaperonin-like protein PrmG to ensure a productive folding, resulting of a soluble PrmA, which leads to the active form of PrmABCD. The cofactor is Fe(2+).

The enzyme catalyses propane + NADH + O2 + H(+) = propan-2-ol + NAD(+) + H2O. Functionally, component of the propane 2-monooxygenase multicomponent enzyme system which is involved in the degradation of propane via the O2-dependent hydroxylation of propane. Also able to catalyze the oxidation the water contaminant N-nitrosodimethylamine (NDMA). The polypeptide is Propane 2-monooxygenase, hydroxylase component large subunit (Rhodococcus jostii (strain RHA1)).